We begin with the raw amino-acid sequence, 342 residues long: Anthranilate phosphoribosyltransferase (342 aa).

Residues Gly81, 84-85 (GD), 91-94 (NVSS), 109-117 (KHGNRGVSS), and Ser121 contribute to the 5-phospho-alpha-D-ribose 1-diphosphate site. Gly81 contributes to the anthranilate binding site. Ser93 is a binding site for Mg(2+). Asn112 contacts anthranilate. Anthranilate is bound at residue Arg167. Residues Asp226 and Glu227 each coordinate Mg(2+).

The protein belongs to the anthranilate phosphoribosyltransferase family. In terms of assembly, homodimer. The cofactor is Mg(2+).

The catalysed reaction is N-(5-phospho-beta-D-ribosyl)anthranilate + diphosphate = 5-phospho-alpha-D-ribose 1-diphosphate + anthranilate. The protein operates within amino-acid biosynthesis; L-tryptophan biosynthesis; L-tryptophan from chorismate: step 2/5. In terms of biological role, catalyzes the transfer of the phosphoribosyl group of 5-phosphorylribose-1-pyrophosphate (PRPP) to anthranilate to yield N-(5'-phosphoribosyl)-anthranilate (PRA). The polypeptide is Anthranilate phosphoribosyltransferase (Marinobacter nauticus (strain ATCC 700491 / DSM 11845 / VT8) (Marinobacter aquaeolei)).